Consider the following 357-residue polypeptide: Arginine kinase Met e 2 (357 aa).

The Phosphagen kinase N-terminal domain maps to 9-91; sequence KLEAGFKKLE…FDPIIEDYHV (83 aa). 64–68 contributes to the L-arginine binding site; the sequence is GVGIY. Residues 119–356 enclose the Phosphagen kinase C-terminal domain; the sequence is FVISTRVRCG…LELIKIEKEM (238 aa). ATP is bound by residues 122-126 and His185; that span reads STRVR. An L-arginine-binding site is contributed by Glu225. Arg229 is a binding site for ATP. Cys271 is a binding site for L-arginine. ATP is bound by residues 280 to 284 and 309 to 314; these read RASVH and RGTRGE. Residue Glu314 participates in L-arginine binding.

The protein belongs to the ATP:guanido phosphotransferase family.

It carries out the reaction L-arginine + ATP = N(omega)-phospho-L-arginine + ADP + H(+). Its function is as follows. Catalyzes the reversible transfer of high energy ATP gamma-phosphate group to L-arginine. This Metapenaeus ensis (Greasyback shrimp) protein is Arginine kinase Met e 2.